A 340-amino-acid polypeptide reads, in one-letter code: Functional amyloid subunit FapC (340 aa).

The first 24 residues, 1-24 (MKATMVLTPLALAMAAVLSVSAYA), serve as a signal peptide directing secretion. The FapC_R1 repeat unit spans residues 67-100 (NNASVSGSIKDASGNVGVNVAAGDNNQQANAAAL). The interval 101 to 133 (ASADASFVFGTATASTSVLQSGYGNTLNNYSNP) is linker 1. Residues 134 to 167 (NTASLSNSANNVSGNLGVNVAAGNFNQQKNDLAA) form a FapC_R2 repeat. Residues 168-290 (AVSNGQYSTA…AIVGFKTPVT (123 aa)) are linker 2. The stretch at 291 to 324 (NNASLSNSLQNVSGNVGVNIAAGGGNQQSNSLSI) is one FapC_R3 repeat. The short motif at 328 to 331 (CSSC) is the Cys-X-X-Cys element.

The protein belongs to the FapB/FapC family. In terms of assembly, the major component of purified amyloid fibrils. Fibrils are resistant to boiling in 2% (weight/vol) SDS and require &gt;90% (vol/vol) formic acid to dissolve. Interacts with FapA in vitro.

The protein resides in the fimbrium. It is found in the secreted. Functionally, the major functional amyloid subunit in this bacterium. Upon overexpression of the endogenous six-gene locus (fapA-fapF), cells form large clumps during liquid growth, make large amounts of biofilm and produce amyloid fibrils. The sequence is that of Functional amyloid subunit FapC from Pseudomonas aeruginosa (strain ATCC 15692 / DSM 22644 / CIP 104116 / JCM 14847 / LMG 12228 / 1C / PRS 101 / PAO1).